Here is a 263-residue protein sequence, read N- to C-terminus: Ycf3-interacting protein 1, chloroplastic (263 aa).

Residues 1-71 (MASNMLQLSL…VNKEEDSATY (71 aa)) constitute a chloroplast transit peptide. A helical transmembrane segment spans residues 238–258 (ALYLVSAFPIIIGISVVLILF).

Belongs to the Y3IP1/CEST family. Interacts with Ycf3.

Its subcellular location is the plastid. It localises to the chloroplast thylakoid membrane. Functionally, nuclear genome-encoded factor that participates in photosystem I (PSI) biogenesis. Cooperates with the plastid genome-encoded protein PSI assembly Ycf3 in the assembly of stable PSI units in the thylakoid membrane. The chain is Ycf3-interacting protein 1, chloroplastic from Nicotiana tabacum (Common tobacco).